The chain runs to 170 residues: MPKTRRQRTRRARRNRPPTPWPISQDLDRASYMDTPSTCLAIVYRPIGVPSQVVYVPPAYIDMPSWPPVQSTNSPGTPSMDALSALLSNTLSLASPPSPPREPQGPSRSLPLPPLLSPPRFHLPSFNQCESTPPTEMDAWNQPSGISSPPSPSPNLASVPKTSTPPGEKP.

Residues 1–16 are compositionally biased toward basic residues; it reads MPKTRRQRTRRARRNR. Disordered stretches follow at residues 1–27 and 69–170; these read MPKTRRQRTRRARRNRPPTPWPISQDL and VQST…GEKP. The Nuclear localization signal, and RNA-binding (RxRE) signature appears at 2–19; the sequence is PKTRRQRTRRARRNRPPT. The tract at residues 57–71 is homomultimerization; that stretch reads PPAYIDMPSWPPVQS. Residues 82–95 are compositionally biased toward low complexity; that stretch reads ALSALLSNTLSLAS. Residues 83 to 94 carry the Nuclear export signal motif; that stretch reads LSALLSNTLSLA. A homomultimerization region spans residues 124–132; that stretch reads PSFNQCEST. Low complexity predominate over residues 143–160; it reads PSGISSPPSPSPNLASVP. Residues Ser-151 and Ser-153 each carry the phosphoserine; by host modification. Residues 161–170 show a composition bias toward polar residues; the sequence is KTSTPPGEKP.

This sequence belongs to the deltaretrovirus Rex protein family. As to quaternary structure, homomultimer. Post-translationally, phosphorylation is essential for RNA-binding and function.

Its subcellular location is the host nucleus. It is found in the host nucleolus. The protein localises to the host cytoplasm. In terms of biological role, rex escorts unspliced gag-pro-pol and singly spliced env mRNAs out of the nucleus of infected cells. These mRNAs carry a recognition sequence called Rex responsive element (RxRE or XRE) located at the 3' region of the long terminal repeat (LTR). This function is essential since most HTLV proteins are translated from unspliced or partially spliced pre-mRNAs that cannot exit the nucleus by the pathway used by fully processed cellular mRNAs. The polypeptide is Protein Rex (Human T-cell leukemia virus 2 (HTLV-2)).